Consider the following 332-residue polypeptide: Phenol 2-monooxygenase, oxygenase component MhpL (332 aa).

Belongs to the TmoE/XamoE family.

It catalyses the reaction phenol + NADH + O2 + H(+) = catechol + NAD(+) + H2O. It functions in the pathway aromatic compound metabolism; phenol degradation. Part of a multicomponent enzyme which catalyzes the degradation of phenol and some of its methylated derivatives. In Acinetobacter pittii (strain PHEA-2), this protein is Phenol 2-monooxygenase, oxygenase component MhpL (mphL).